The chain runs to 342 residues: Serpentine receptor class r-10 (342 aa).

At 1-11 the chain is on the extracellular side; the sequence is MTGELWLTLVD. Residues 12–32 traverse the membrane as a helical segment; the sequence is TADIVGFSMTFCVNIVLLFLL. At 33–38 the chain is on the cytoplasmic side; sequence KNRGKN. A helical transmembrane segment spans residues 39 to 59; that stretch reads LGTYKHLMAFFSVFSIFYAII. The Extracellular portion of the chain corresponds to 60-92; that stretch reads ESILRPIMHIENATFFLISRKRFNYSTRLGKIN. N-linked (GlcNAc...) asparagine glycans are attached at residues asparagine 71 and asparagine 83. A helical transmembrane segment spans residues 93 to 113; the sequence is SAFYCACFATSFVVSGVHFVY. Residues 114 to 131 are Cytoplasmic-facing; the sequence is RFFASCKPHLLRSFNMPY. A helical transmembrane segment spans residues 132–152; that stretch reads LLLWPLGCSIPVMMWASVSYF. Topologically, residues 153-202 are extracellular; that stretch reads LYPDTAFTEAAVTNVLNTHYHSIKKDNVSYIAYVYYQYDENGVRYVYLKN. An N-linked (GlcNAc...) asparagine glycan is attached at asparagine 179. A helical transmembrane segment spans residues 203 to 223; it reads LLGCFVHYFVMSATFVVMFIC. Residues 224–257 lie on the Cytoplasmic side of the membrane; sequence GYLTWKTMRKHKTASDRTRQLQKQLFKALVLQTL. The chain crosses the membrane as a helical span at residues 258 to 278; that stretch reads IPTIFMYAPTGVMFIAPFFSI. Over 279 to 285 the chain is Extracellular; it reads NLNANAN. Residues 286 to 306 traverse the membrane as a helical segment; that stretch reads FIVFCSFLYPGLDPLILILII. Topologically, residues 307 to 342 are cytoplasmic; sequence RDFRQTVFKFFCLRKKNSVDESRSTTRANMSQVATH.

The protein belongs to the nematode receptor-like protein str family. In terms of assembly, interacts with odr-4.

Its subcellular location is the cell projection. It is found in the cilium membrane. Functionally, an odorant receptor which affects chemotaxis to the volatile odorant diacetyl. Specifies AWA neuronal cell fate via the odr-7 pathway. This chain is Serpentine receptor class r-10, found in Caenorhabditis briggsae.